A 142-amino-acid chain; its full sequence is Hemoglobin subunit alpha (142 aa).

An N-acetylserine modification is found at serine 1. Residues 1-142 (SLTAKSKSIV…VASALSEKYR (142 aa)) enclose the Globin domain. Histidine 59 contributes to the O2 binding site. Histidine 88 serves as a coordination point for heme b.

Belongs to the globin family. As to quaternary structure, heterotetramer of two alpha chains and two beta chains. Red blood cells.

Involved in oxygen transport from gills to the various peripheral tissues. The protein is Hemoglobin subunit alpha (hba) of Electrophorus electricus (Electric eel).